A 542-amino-acid polypeptide reads, in one-letter code: Protein MGF 505-11L (542 aa).

This sequence belongs to the asfivirus MGF 505 family.

Its function is as follows. Plays a role in virus cell tropism, and may be required for efficient virus replication in macrophages. The sequence is that of Protein MGF 505-11L from Ornithodoros (relapsing fever ticks).